The following is a 755-amino-acid chain: Cellulose synthase-like protein B4 (755 aa).

The next 2 helical transmembrane spans lie at 24–44 and 49–69; these read AVDL…ILHV and TVWI…LLIT. Catalysis depends on residues aspartate 136 and aspartate 461. A run of 6 helical transmembrane segments spans residues 533 to 556, 569 to 589, 615 to 635, 674 to 694, 702 to 722, and 733 to 753; these read AYLY…LPAY, VYLG…LWEF, LFSV…VFIV, FLPG…CLVG, GSGL…LPFL, and IPFS…VLSV.

The protein belongs to the glycosyltransferase 2 family. Plant cellulose synthase-like B subfamily.

It is found in the golgi apparatus membrane. In terms of biological role, thought to be a Golgi-localized beta-glycan synthase that polymerize the backbones of noncellulosic polysaccharides (hemicelluloses) of plant cell wall. The sequence is that of Cellulose synthase-like protein B4 (CSLB4) from Arabidopsis thaliana (Mouse-ear cress).